The sequence spans 163 residues: Nucleotide-binding protein Mflv_5248 (163 aa).

It belongs to the YajQ family.

Its function is as follows. Nucleotide-binding protein. In Mycolicibacterium gilvum (strain PYR-GCK) (Mycobacterium gilvum (strain PYR-GCK)), this protein is Nucleotide-binding protein Mflv_5248.